We begin with the raw amino-acid sequence, 790 residues long: MSSLTRLLQEKRKNETSNSSPRTSADTLTTTPESQSLDLHSRNKSSSHIGSVSNSSSSDRNRANVPVPGSVTTVTQIYSEEDSSSTAGSSLDDRNQFSSSFLNANFAHTASFYGTSAQSRDRFGSLINDQGTAGLSSHGGSFAAQNRITSRLSTTSHTSGRAIPSLSSSIPYSVPNSNKDNNSSNSNSSSLSSSWLETYAGGMPNNISAIDSNVISSPKVDSVEPRFVISKQKLQKASMDSNNANATQSRSISRSGSFSSQLGNFFFSKNSKESSNSNSAGMSFSANSNGPSPNIKNPNVTNGSTPIPKPIRARQSSIYSASRQPTGSYTDNFYGSPSSVHDHLPPSQSVPRSQHSSIGDLKRFFKKSSNSNLSSNSNNVIPNGSPLSSGIAVPSHSHSSSHFAAGNNSYSTSYNGNGDTIYSHSHGGSGIPFSKRYIKTGADLGAGAGGSVKLAQRISDNKIFAVKEFRTKFENESKRDYVKKITSEYCIGTTLNHPNIIETIEIVYENDRILQVMEYCEYDLFAIVMSNKMSYEEICCCFKQILTGVQYLHSIGLAHRDLKLDNCVINEKGIVKLIDFGAAVVFSYPFSKNLVEASGIVGSDPYLAPEVCIFAKYDPRPVDIWSSAIIFACMILKKFPWKIPKLRDNSFKLFCSGRDCDSLSSLVTRTPDPPSYDESHSTEKKKPESSSNNVSDPNNVNIGPQRLLHSLPEETQHIVGRMIDLAPACRGNIEEIMEDPWIRSIDMCHLVEDGLSFKVVRGEDHHHTQVDQSEAHIAGLEKKKKKQNNQ.

The tract at residues 1–68 (MSSLTRLLQE…DRNRANVPVP (68 aa)) is disordered. Residues 16–38 (TSNSSPRTSADTLTTTPESQSLD) show a composition bias toward polar residues. The span at 46 to 58 (SSHIGSVSNSSSS) shows a compositional bias: low complexity. The residue at position 47 (serine 47) is a Phosphoserine; by autocatalysis. Phosphoserine occurs at positions 85, 90, 100, 111, 116, 125, 137, and 141. Residues 151 to 175 (RLSTTSHTSGRAIPSLSSSIPYSVP) show a composition bias toward polar residues. 2 disordered regions span residues 151–188 (RLSTTSHTSGRAIPSLSSSIPYSVPNSNKDNNSSNSNS) and 234–258 (LQKASMDSNNANATQSRSISRSGSF). A compositionally biased stretch (low complexity) spans 176–188 (NSNKDNNSSNSNS). Residues 238–248 (SMDSNNANATQ) show a composition bias toward polar residues. Low complexity predominate over residues 249-258 (SRSISRSGSF). A Phosphoserine; by autocatalysis modification is found at serine 257. 7 positions are modified to phosphoserine: serine 259, serine 260, serine 288, serine 292, serine 317, serine 320, and serine 328. Over residues 276-289 (NSNSAGMSFSANSN) the composition is skewed to low complexity. A disordered region spans residues 276–357 (NSNSAGMSFS…QSVPRSQHSS (82 aa)). Polar residues-rich tracts occupy residues 290 to 305 (GPSPNIKNPNVTNGST), 314 to 339 (RQSSIYSASRQPTGSYTDNFYGSPSS), and 346 to 357 (PSQSVPRSQHSS). Tyrosine 334 bears the Phosphotyrosine mark. Serine 336, serine 353, and serine 356 each carry phosphoserine. At serine 357 the chain carries Phosphoserine; by autocatalysis. Serine 385 carries the phosphoserine modification. Positions 438 to 742 (IKTGADLGAG…IEEIMEDPWI (305 aa)) constitute a Protein kinase domain. ATP-binding positions include 444–452 (LGAGAGGSV) and lysine 467. Aspartate 561 acts as the Proton acceptor in catalysis. Disordered stretches follow at residues 666 to 704 (LVTRTPDPPSYDESHSTEKKKPESSSNNVSDPNNVNIGP) and 766 to 790 (HHTQVDQSEAHIAGLEKKKKKQNNQ). Residues 677–688 (DESHSTEKKKPE) show a composition bias toward basic and acidic residues. The segment covering 689 to 701 (SSSNNVSDPNNVN) has biased composition (low complexity).

Belongs to the protein kinase superfamily. Ser/Thr protein kinase family. In terms of assembly, interacts with TIP41. In terms of processing, hyperphosphorylated in nitrogen-rich growth medium. Nitrogen limitation (or rapamycin treatment) leads to substantial, though not complete dephosphorylation. Autophosphorylation plays only a minor role and seems not to be regulated by the quality of the nitrogen source.

The protein resides in the cytoplasm. The catalysed reaction is L-seryl-[protein] + ATP = O-phospho-L-seryl-[protein] + ADP + H(+). The enzyme catalyses L-threonyl-[protein] + ATP = O-phospho-L-threonyl-[protein] + ADP + H(+). With respect to regulation, dephosphorylation by SIT4 activates NPR1 kinase activity. Functionally, nutrient-regulated protein kinase that promotes the activity of at least 6 distinct transport systems for nitrogenous nutrients under conditions of nitrogen catabolite derepression. Under poor nitrogen growth conditions, required for post-Golgi sorting of the general amino acid permease GAP1 and the three known ammonia permeases, MEP1/2/3, to the plasma membrane. Also contributes to the stability and the retention of GAP1 at the plasma membrane. Inversely, promotes the degradation of tryptophan permease TAT2 under the same conditions. Activity is regulated by the TOR signaling pathway via phosphatase SIT4. Although thought to be involved in regulation of GLN3-dependent transcription by nitrogen catabolite repression, this seems to be an indirect effect from the reduced uptake of the nitrogen-repressing compound. The chain is Nitrogen permease reactivator protein (NPR1) from Saccharomyces cerevisiae (strain ATCC 204508 / S288c) (Baker's yeast).